A 335-amino-acid chain; its full sequence is MVREKITVSTRTLEWKCVELRTDSKRLYYGRFILSPLMKGQADTIGIAMRRALLGEIEGTCITRVKSEKVAHEYSTIAGIQESVHEILMNLKEIVFRSNLYGTCDASICVRGPGYVTAQDIVLPPYVEIVDNTQHIARLMEPINLCIRLEIERNRGYLIKTPQNFQDGSYPIDAVFMPIRNANYSIHSYGNGNEKQEILFLEIWTNGSLTPKEALHQASRNLIDLFIPFLHMEEQNSHLENNQHTVPLAPFFFHDKLDKLRKNKKEIALKSIFIDQSELPPRIYNCLKRSNIYTLLDLLNNSQENLMKIEHFHIEDVKEILGILEKQLVIFLPKK.

The alpha N-terminal domain (alpha-NTD) stretch occupies residues 1–233 (MVREKITVST…DLFIPFLHME (233 aa)). Positions 265 to 335 (KEIALKSIFI…KQLVIFLPKK (71 aa)) are alpha C-terminal domain (alpha-CTD).

It belongs to the RNA polymerase alpha chain family. In plastids the minimal PEP RNA polymerase catalytic core is composed of four subunits: alpha, beta, beta', and beta''. When a (nuclear-encoded) sigma factor is associated with the core the holoenzyme is formed, which can initiate transcription.

The protein localises to the plastid. It localises to the chloroplast. The enzyme catalyses RNA(n) + a ribonucleoside 5'-triphosphate = RNA(n+1) + diphosphate. Functionally, DNA-dependent RNA polymerase catalyzes the transcription of DNA into RNA using the four ribonucleoside triphosphates as substrates. This chain is DNA-directed RNA polymerase subunit alpha, found in Coffea arabica (Arabian coffee).